Reading from the N-terminus, the 1040-residue chain is Multidrug resistance protein MdtB (1040 aa).

A run of 12 helical transmembrane segments spans residues 16 to 36, 347 to 367, 369 to 389, 396 to 416, 440 to 460, 472 to 492, 537 to 557, 863 to 883, 888 to 908, 911 to 931, 968 to 988, and 998 to 1018; these read FIMR…AGII, LMMA…NIPA, IIPG…MVFL, LTLM…IVVI, IGFT…PLLF, FAIT…TLTP, WLTL…WVFI, LGST…VLGI, FIHP…ALLA, IAGS…IGIV, ILMT…STGV, and IGMV…TPVI.

The protein belongs to the resistance-nodulation-cell division (RND) (TC 2.A.6) family. MdtB subfamily. Part of a tripartite efflux system composed of MdtA, MdtB and MdtC. MdtB forms a heteromultimer with MdtC.

Its subcellular location is the cell inner membrane. In terms of biological role, the MdtABC tripartite complex confers resistance against novobiocin and deoxycholate. The protein is Multidrug resistance protein MdtB of Escherichia coli O139:H28 (strain E24377A / ETEC).